The chain runs to 204 residues: Carbon disulfide hydrolase (204 aa).

Zn(2+) is bound by residues C35, H88, and C91.

The protein belongs to the beta-class carbonic anhydrase family. Forms a hexadecameric catenane homooligomer, through interactions of two interlocked octameric rings. Exists as both octamers and hexadecamers in solution. Requires Zn(2+) as cofactor.

It carries out the reaction carbon disulfide + 2 H2O = 2 hydrogen sulfide + CO2 + 2 H(+). It participates in sulfur metabolism; hydrogen sulfide biosynthesis. In terms of biological role, catalyzes the conversion of carbon disulfide into hydrogen sulfide and carbon dioxide, with carbonyl sulfide as an intermediate. Likely plays a key role in sulfur metabolism that allows Acidianus sp. A1-3 to grow on carbon disulfide as the main carbon and energy source. Does not show carbonic anhydrase activity (hydration of CO(2) to carbonate). The sequence is that of Carbon disulfide hydrolase from Acidianus sp. (strain A1-3).